The chain runs to 262 residues: MSAAAGAAQAAEHHDMLHMVEMDLNFWNIPLFTEYDKYWHIMGLSISPRTMIMTWITMALVLLFAWACTKNQNVRSPGKAQATFEVLWEFLGGQVFSNLGNKLGAAMMPIIVTFFIYIVFANLLGLIPTLSSPTADKNTTFGLALIVVLLIHYHGLKANGVGGHIGHYFQPFKPFVVIHLIEEIARPVTLAFRLYGNIFAGEVLIAVLLGLININAYVFGGFIPSVIWLAFSVFVGFVQAFVFSMLTIAYVSQFAAHEADHH.

The next 6 helical transmembrane spans lie at 50–70, 107–127, 141–161, 194–214, 218–238, and 239–259; these read TMIM…ACTK, MMPI…LGLI, FGLA…ANGV, LYGN…LINI, VFGG…VGFV, and QAFV…AHEA.

Belongs to the ATPase A chain family. F-type ATPases have 2 components, CF(1) - the catalytic core - and CF(0) - the membrane proton channel. CF(1) has five subunits: alpha(3), beta(3), gamma(1), delta(1), epsilon(1). CF(0) has three main subunits: a(1), b(2) and c(9-12). The alpha and beta chains form an alternating ring which encloses part of the gamma chain. CF(1) is attached to CF(0) by a central stalk formed by the gamma and epsilon chains, while a peripheral stalk is formed by the delta and b chains.

The protein resides in the cell membrane. In terms of biological role, key component of the proton channel; it plays a direct role in the translocation of protons across the membrane. This is ATP synthase subunit a from Desulforamulus reducens (strain ATCC BAA-1160 / DSM 100696 / MI-1) (Desulfotomaculum reducens).